Consider the following 229-residue polypeptide: Uracil-DNA glycosylase (229 aa).

D64 (proton acceptor) is an active-site residue.

The protein belongs to the uracil-DNA glycosylase (UDG) superfamily. UNG family.

Its subcellular location is the cytoplasm. It catalyses the reaction Hydrolyzes single-stranded DNA or mismatched double-stranded DNA and polynucleotides, releasing free uracil.. Its function is as follows. Excises uracil residues from the DNA which can arise as a result of misincorporation of dUMP residues by DNA polymerase or due to deamination of cytosine. The sequence is that of Uracil-DNA glycosylase from Salmonella arizonae (strain ATCC BAA-731 / CDC346-86 / RSK2980).